A 319-amino-acid chain; its full sequence is Thioredoxin reductase (319 aa).

Residue 37–44 participates in FAD binding; the sequence is ERGVPGGQ. Cysteine 136 and cysteine 139 are joined by a disulfide. 279 to 288 provides a ligand contact to FAD; that stretch reads DVRAKSLRQI.

Belongs to the class-II pyridine nucleotide-disulfide oxidoreductase family. In terms of assembly, homodimer. FAD serves as cofactor.

The protein resides in the cytoplasm. It catalyses the reaction [thioredoxin]-dithiol + NADP(+) = [thioredoxin]-disulfide + NADPH + H(+). The protein is Thioredoxin reductase (trxB) of Listeria monocytogenes serovar 1/2a (strain ATCC BAA-679 / EGD-e).